The primary structure comprises 324 residues: Ribonucleoside-diphosphate reductase subunit beta nrdF2 (324 aa).

Glutamate 103 and histidine 106 together coordinate Fe cation. Tyrosine 110 is an active-site residue. Residues glutamate 163, glutamate 197, and histidine 200 each coordinate Fe cation.

It belongs to the ribonucleoside diphosphate reductase small chain family. Tetramer of two alpha and two beta subunits. The cofactor is Fe cation.

The catalysed reaction is a 2'-deoxyribonucleoside 5'-diphosphate + [thioredoxin]-disulfide + H2O = a ribonucleoside 5'-diphosphate + [thioredoxin]-dithiol. Functionally, provides the precursors necessary for DNA synthesis. Catalyzes the biosynthesis of deoxyribonucleotides from the corresponding ribonucleotides. In Mycobacterium tuberculosis (strain CDC 1551 / Oshkosh), this protein is Ribonucleoside-diphosphate reductase subunit beta nrdF2 (nrdF2).